A 445-amino-acid polypeptide reads, in one-letter code: Argininosuccinate lyase (445 aa).

Belongs to the lyase 1 family. Argininosuccinate lyase subfamily.

It localises to the cytoplasm. It carries out the reaction 2-(N(omega)-L-arginino)succinate = fumarate + L-arginine. The protein operates within amino-acid biosynthesis; L-arginine biosynthesis; L-arginine from L-ornithine and carbamoyl phosphate: step 3/3. The sequence is that of Argininosuccinate lyase from Xylella fastidiosa (strain Temecula1 / ATCC 700964).